The primary structure comprises 353 residues: 3-isopropylmalate dehydrogenase (353 aa).

75 to 88 contacts NAD(+); it reads GPKWENLPHEHKPE. 4 residues coordinate substrate: Arg95, Arg105, Arg133, and Asp219. The Mg(2+) site is built by Asp219, Asp243, and Asp247. 276–288 lines the NAD(+) pocket; that stretch reads GSAPDIAGKNIAN.

This sequence belongs to the isocitrate and isopropylmalate dehydrogenases family. LeuB type 1 subfamily. As to quaternary structure, homodimer. The cofactor is Mg(2+). Mn(2+) serves as cofactor.

It is found in the cytoplasm. It catalyses the reaction (2R,3S)-3-isopropylmalate + NAD(+) = 4-methyl-2-oxopentanoate + CO2 + NADH. It participates in amino-acid biosynthesis; L-leucine biosynthesis; L-leucine from 3-methyl-2-oxobutanoate: step 3/4. Catalyzes the oxidation of 3-carboxy-2-hydroxy-4-methylpentanoate (3-isopropylmalate) to 3-carboxy-4-methyl-2-oxopentanoate. The product decarboxylates to 4-methyl-2 oxopentanoate. In Chlorobium luteolum (strain DSM 273 / BCRC 81028 / 2530) (Pelodictyon luteolum), this protein is 3-isopropylmalate dehydrogenase.